A 234-amino-acid chain; its full sequence is 2-C-methyl-D-erythritol 4-phosphate cytidylyltransferase (234 aa).

It belongs to the IspD/TarI cytidylyltransferase family. IspD subfamily.

The enzyme catalyses 2-C-methyl-D-erythritol 4-phosphate + CTP + H(+) = 4-CDP-2-C-methyl-D-erythritol + diphosphate. Its pathway is isoprenoid biosynthesis; isopentenyl diphosphate biosynthesis via DXP pathway; isopentenyl diphosphate from 1-deoxy-D-xylulose 5-phosphate: step 2/6. Its function is as follows. Catalyzes the formation of 4-diphosphocytidyl-2-C-methyl-D-erythritol from CTP and 2-C-methyl-D-erythritol 4-phosphate (MEP). The protein is 2-C-methyl-D-erythritol 4-phosphate cytidylyltransferase of Desulforamulus reducens (strain ATCC BAA-1160 / DSM 100696 / MI-1) (Desulfotomaculum reducens).